The sequence spans 203 residues: Chemotactic transduction protein ChpE (203 aa).

5 helical membrane passes run 3 to 23 (AIFL…GAVF), 46 to 66 (LIGD…LLGY), 69 to 89 (VRIP…VQGL), 123 to 143 (NVVY…GTPN), and 149 to 169 (VFFA…AALV).

The protein belongs to the Rht family.

It localises to the cell membrane. The protein is Chemotactic transduction protein ChpE (chpE) of Pseudomonas aeruginosa (strain ATCC 15692 / DSM 22644 / CIP 104116 / JCM 14847 / LMG 12228 / 1C / PRS 101 / PAO1).